The primary structure comprises 143 residues: Histone H2AX (143 aa).

The tract at residues 1–22 is disordered; it reads MSGRGKTGGKARAKAKSRSSRA. An N-acetylserine modification is found at Ser-2. At Ser-2 the chain carries Phosphoserine. Lys-6 and Lys-10 each carry N6-acetyllysine. The segment covering 7–19 has biased composition (basic residues); that stretch reads TGGKARAKAKSRS. Residue Lys-10 is modified to N6-lactoyllysine; alternate. Glycyl lysine isopeptide (Lys-Gly) (interchain with G-Cter in ubiquitin) cross-links involve residues Lys-14 and Lys-16. Position 37 is an N6-acetyllysine; by CREBBP and EP300 (Lys-37). Lys-120 participates in a covalent cross-link: Glycyl lysine isopeptide (Lys-Gly) (interchain with G-Cter in ubiquitin). Phosphoserine occurs at positions 121 and 122. The disordered stretch occupies residues 121–143; the sequence is SSATVGPKAPAVGKKASQASQEY. Glycyl lysine isopeptide (Lys-Gly) (interchain with G-Cter in SUMO2) cross-links involve residues Lys-128 and Lys-135. The residue at position 137 (Ser-137) is a Phosphoserine. A Phosphoserine; by ATM, ATR and PRKDC modification is found at Ser-140. The [ST]-Q motif signature appears at 140–141; that stretch reads SQ. Residue Tyr-143 is modified to Phosphotyrosine; by WSTF.

Belongs to the histone H2A family. As to quaternary structure, the nucleosome is a histone octamer containing two molecules each of H2A, H2B, H3 and H4 assembled in one H3-H4 heterotetramer and two H2A-H2B heterodimers. The octamer wraps approximately 147 bp of DNA. Interacts with numerous proteins required for DNA damage signaling and repair when phosphorylated on Ser-140. These include MDC1, BRCA1 and the MRN complex, composed of MRE11, RAD50, and NBN. Interaction with the MRN complex is mediated at least in part by NBN. Also interacts with DHX9/NDHII when phosphorylated on Ser-140 and MCPH1 when phosphorylated at Ser-140 or Tyr-143. Interacts with ARRB2; the interaction is detected in the nucleus upon OR1D2 stimulation. Interacts with WRAP53/TCAB1. Interacts with TP53BP1. Interacts with HDGFL2. Post-translationally, phosphorylated on Ser-140 (to form gamma-H2AX or H2AX139ph) in response to DNA double strand breaks (DSBs) generated by exogenous genotoxic agents, by stalled replication forks, by meiotic recombination events and during immunoglobulin class switching in lymphocytes. Phosphorylation can extend up to several thousand nucleosomes from the actual site of the DSB and may mark the surrounding chromatin for recruitment of proteins required for DNA damage signaling and repair. Widespread phosphorylation may also serve to amplify the damage signal or aid repair of persistent lesions. Phosphorylation of Ser-140 (H2AX139ph) in response to ionizing radiation is mediated by both ATM and PRKDC while defects in DNA replication induce Ser-140 phosphorylation (H2AX139ph) subsequent to activation of ATR and PRKDC. Dephosphorylation of Ser-140 by PP2A is required for DNA DSB repair. In meiosis, Ser-140 phosphorylation (H2AX139ph) first occurs at synaptonemal complexes during leptotene and is an ATM-dependent response to the formation of programmed DSBs by SPO11. Ser-140 phosphorylation (H2AX139ph) subsequently occurs at unsynapsed regions of both autosomes and the XY bivalent during zygotene and is ATR- and BRCA1-dependent. Ser-140 phosphorylation (H2AX139ph) may also be required for transcriptional repression of unsynapsed chromatin and meiotic sex chromosome inactivation (MSCI), whereby the X and Y chromosomes condense in pachytene to form the heterochromatic XY-body. During immunoglobulin class switch recombination in lymphocytes, Ser-140 phosphorylation (H2AX139ph) at sites of DNA-recombination requires the activation-induced cytidine deaminase AICDA. Phosphorylation at Tyr-143 (H2AXY142ph) by BAZ1B/WSTF determines the relative recruitment of either DNA repair or pro-apoptotic factors. Phosphorylation at Tyr-143 (H2AXY142ph) favors the recruitment of APBB1/FE65 and pro-apoptosis factors such as MAPK8/JNK1, triggering apoptosis. In contrast, dephosphorylation of Tyr-143 by EYA proteins (EYA1, EYA2, EYA3 or EYA4) favors the recruitment of MDC1-containing DNA repair complexes to the tail of phosphorylated Ser-140 (H2AX139ph). Phosphorylated by VRK1. Monoubiquitination of Lys-120 (H2AXK119ub) by RING1 and RNF2/RING2 complex gives a specific tag for epigenetic transcriptional repression. Following DNA double-strand breaks (DSBs), it is ubiquitinated through 'Lys-63' linkage of ubiquitin moieties by the E2 ligase UBE2N and the E3 ligases RNF8 and RNF168, leading to the recruitment of repair proteins to sites of DNA damage. Ubiquitination at Lys-14 and Lys-16 (H2AK13Ub and H2AK15Ub, respectively) in response to DNA damage is initiated by RNF168 that mediates monoubiquitination at these 2 sites, and 'Lys-63'-linked ubiquitin are then conjugated to monoubiquitin; RNF8 is able to extend 'Lys-63'-linked ubiquitin chains in vitro. H2AK119Ub and ionizing radiation-induced 'Lys-63'-linked ubiquitination (H2AK13Ub and H2AK15Ub) are distinct events. In terms of processing, acetylation at Lys-6 (H2AXK5ac) by KAT5 component of the NuA4 histone acetyltransferase complex promotes NBN/NBS1 assembly at the sites of DNA damage. Acetylation at Lys-37 increases in S and G2 phases. This modification has been proposed to be important for DNA double-strand break repair. Most abundant in testis, thymus and spleen.

The protein localises to the nucleus. It localises to the chromosome. Variant histone H2A which replaces conventional H2A in a subset of nucleosomes. Nucleosomes wrap and compact DNA into chromatin, limiting DNA accessibility to the cellular machineries which require DNA as a template. Histones thereby play a central role in transcription regulation, DNA repair, DNA replication and chromosomal stability. DNA accessibility is regulated via a complex set of post-translational modifications of histones, also called histone code, and nucleosome remodeling. Required for checkpoint-mediated arrest of cell cycle progression in response to low doses of ionizing radiation and for efficient repair of DNA double strand breaks (DSBs) specifically when modified by C-terminal phosphorylation. The sequence is that of Histone H2AX from Mus musculus (Mouse).